Reading from the N-terminus, the 233-residue chain is uncharacterized protein (233 aa).

It belongs to the asfivirus H233R family.

This is an uncharacterized protein from African swine fever virus (isolate Tick/Malawi/Lil 20-1/1983) (ASFV).